We begin with the raw amino-acid sequence, 312 residues long: MLQYQIDRIEHQVADDRAQSGVFLIGPLERGQATTLGNALRRVLMGGLEGSAVTAIRIAGVNHEYATVPGVREDVLDILLNCKELTVNSRSAELEIGRLVVAGPAEVKAGDLQFSSQVQVVDTDRPIATVADGHSLELELHVERGVGYRPVDRHNEETSAIDLLQIDAVFMPVTRVNFTIDETAVAEGGSARERLRMEIVTDGSITPDEALAQSANQLIELFQPLATVTLVEEVPAEPEPSAEAQIPLEELNLSVRAYNCLKRAQVNSVSDLMGFSYEDLLEIKNFGSKSADEVIEALERIGISIPQSRTSA.

The interval 1–229 is alpha N-terminal domain (alpha-NTD); that stretch reads MLQYQIDRIE…ELFQPLATVT (229 aa). Positions 239–312 are alpha C-terminal domain (alpha-CTD); the sequence is EPSAEAQIPL…ISIPQSRTSA (74 aa).

The protein belongs to the RNA polymerase alpha chain family. As to quaternary structure, in cyanobacteria the RNAP catalytic core is composed of 2 alpha, 1 beta, 1 beta', 1 gamma and 1 omega subunit. When a sigma factor is associated with the core the holoenzyme is formed, which can initiate transcription.

The catalysed reaction is RNA(n) + a ribonucleoside 5'-triphosphate = RNA(n+1) + diphosphate. DNA-dependent RNA polymerase catalyzes the transcription of DNA into RNA using the four ribonucleoside triphosphates as substrates. The polypeptide is DNA-directed RNA polymerase subunit alpha (Synechococcus sp. (strain CC9605)).